The sequence spans 385 residues: Phosphate acyltransferase (385 aa).

Residues 1 to 17 (MAAGTSIGTTPGGSTSP) show a composition bias toward low complexity. Residues 1 to 28 (MAAGTSIGTTPGGSTSPETPPEHGLTGT) form a disordered region.

This sequence belongs to the PlsX family. As to quaternary structure, homodimer. Probably interacts with PlsY.

It is found in the cytoplasm. It carries out the reaction a fatty acyl-[ACP] + phosphate = an acyl phosphate + holo-[ACP]. Its pathway is lipid metabolism; phospholipid metabolism. Catalyzes the reversible formation of acyl-phosphate (acyl-PO(4)) from acyl-[acyl-carrier-protein] (acyl-ACP). This enzyme utilizes acyl-ACP as fatty acyl donor, but not acyl-CoA. This chain is Phosphate acyltransferase, found in Dinoroseobacter shibae (strain DSM 16493 / NCIMB 14021 / DFL 12).